The following is a 386-amino-acid chain: Lipoyl synthase, mitochondrial (386 aa).

A mitochondrion-targeting transit peptide spans 1–21 (MISRNSILLRRLYPTTIIRTL). Residues C107, C112, C118, C137, C141, C144, and S352 each contribute to the [4Fe-4S] cluster site. In terms of domain architecture, Radical SAM core spans 122–341 (KKSEATATIM…RDTALDMGFL (220 aa)).

Belongs to the radical SAM superfamily. Lipoyl synthase family. Requires [4Fe-4S] cluster as cofactor.

The protein localises to the mitochondrion. The enzyme catalyses [[Fe-S] cluster scaffold protein carrying a second [4Fe-4S](2+) cluster] + N(6)-octanoyl-L-lysyl-[protein] + 2 oxidized [2Fe-2S]-[ferredoxin] + 2 S-adenosyl-L-methionine + 4 H(+) = [[Fe-S] cluster scaffold protein] + N(6)-[(R)-dihydrolipoyl]-L-lysyl-[protein] + 4 Fe(3+) + 2 hydrogen sulfide + 2 5'-deoxyadenosine + 2 L-methionine + 2 reduced [2Fe-2S]-[ferredoxin]. Its pathway is protein modification; protein lipoylation via endogenous pathway; protein N(6)-(lipoyl)lysine from octanoyl-[acyl-carrier-protein]: step 2/2. Functionally, catalyzes the radical-mediated insertion of two sulfur atoms into the C-6 and C-8 positions of the octanoyl moiety bound to the lipoyl domains of lipoate-dependent enzymes, thereby converting the octanoylated domains into lipoylated derivatives. The chain is Lipoyl synthase, mitochondrial (LAB5) from Candida albicans (strain SC5314 / ATCC MYA-2876) (Yeast).